The primary structure comprises 168 residues: Nicotinamide-nucleotide adenylyltransferase (168 aa).

This sequence belongs to the archaeal NMN adenylyltransferase family.

The protein resides in the cytoplasm. The enzyme catalyses beta-nicotinamide D-ribonucleotide + ATP + H(+) = diphosphate + NAD(+). It participates in cofactor biosynthesis; NAD(+) biosynthesis; NAD(+) from nicotinamide D-ribonucleotide: step 1/1. This chain is Nicotinamide-nucleotide adenylyltransferase, found in Methanoculleus marisnigri (strain ATCC 35101 / DSM 1498 / JR1).